We begin with the raw amino-acid sequence, 415 residues long: uncharacterized protein (415 aa).

4 residues coordinate [4Fe-4S] cluster: cysteine 66, cysteine 72, cysteine 75, and cysteine 149. S-adenosyl-L-methionine-binding residues include glutamine 249, phenylalanine 276, glutamate 296, and aspartate 344. The active-site Nucleophile is the cysteine 370.

It belongs to the class I-like SAM-binding methyltransferase superfamily. RNA M5U methyltransferase family.

This is an uncharacterized protein from Brucella suis biovar 1 (strain 1330).